Consider the following 648-residue polypeptide: Replication restart protein PriA (648 aa).

The Helicase ATP-binding domain maps to 131–297; the sequence is TILNESNKPT…EIGKYQLVTL (167 aa). ATP is bound at residue 144 to 151; sequence GVTGSGKT. A DEAH box motif is present at residues 240 to 243; it reads DEEH. 8 residues coordinate Zn(2+): C358, C361, C367, C370, C385, C388, C398, and C401. In terms of domain architecture, Helicase C-terminal spans 393-548; sequence KIFSSCPECL…SFFANELEIR (156 aa).

This sequence belongs to the helicase family. PriA subfamily. As to quaternary structure, component of the replication restart primosome. It depends on Zn(2+) as a cofactor.

The catalysed reaction is Couples ATP hydrolysis with the unwinding of duplex DNA by translocating in the 3'-5' direction.. The enzyme catalyses ATP + H2O = ADP + phosphate + H(+). Initiates the restart of stalled replication forks, which reloads the replicative helicase on sites other than the origin of replication. Recognizes and binds to abandoned replication forks and remodels them to uncover a helicase loading site. Promotes assembly of the primosome at these replication forks. This Rickettsia felis (strain ATCC VR-1525 / URRWXCal2) (Rickettsia azadi) protein is Replication restart protein PriA.